The following is a 220-amino-acid chain: Cysteine-rich venom protein VAR5 (220 aa).

A signal peptide spans 1–22 (MILLKLYLTLAAILCQSRGTTS). Positions 41–169 (NKHNDLRRTV…PLKYFLVCQY (129 aa)) constitute an SCP domain. 5 cysteine pairs are disulfide-bonded: Cys-77–Cys-156, Cys-95–Cys-170, Cys-151–Cys-167, Cys-189–Cys-196, and Cys-192–Cys-201. The ShKT domain occupies 205-220 (CEHSNQYINCPDLTKQ).

The protein belongs to the CRISP family. Post-translationally, contains 8 disulfide bonds. In terms of tissue distribution, expressed by the venom gland.

It is found in the secreted. Its function is as follows. Blocks ryanodine receptors, and potassium channels. This Varanus acanthurus (Ridge-tailed monitor) protein is Cysteine-rich venom protein VAR5.